Consider the following 170-residue polypeptide: ATP synthase subunit b (170 aa).

Residues 15–37 (FNLFETNILNWAVVIFGLYKFLP) traverse the membrane as a helical segment. Residues 72 to 98 (AKKDLSSAEEKASQIKADSLKRSESIR) form a disordered region.

The protein belongs to the ATPase B chain family. As to quaternary structure, F-type ATPases have 2 components, F(1) - the catalytic core - and F(0) - the membrane proton channel. F(1) has five subunits: alpha(3), beta(3), gamma(1), delta(1), epsilon(1). F(0) has four main subunits: a(1), b(1), b'(1) and c(10-14). The alpha and beta chains form an alternating ring which encloses part of the gamma chain. F(1) is attached to F(0) by a central stalk formed by the gamma and epsilon chains, while a peripheral stalk is formed by the delta, b and b' chains.

It localises to the cellular thylakoid membrane. F(1)F(0) ATP synthase produces ATP from ADP in the presence of a proton or sodium gradient. F-type ATPases consist of two structural domains, F(1) containing the extramembraneous catalytic core and F(0) containing the membrane proton channel, linked together by a central stalk and a peripheral stalk. During catalysis, ATP synthesis in the catalytic domain of F(1) is coupled via a rotary mechanism of the central stalk subunits to proton translocation. In terms of biological role, component of the F(0) channel, it forms part of the peripheral stalk, linking F(1) to F(0). The sequence is that of ATP synthase subunit b from Prochlorococcus marinus (strain MIT 9215).